The chain runs to 489 residues: Cytochrome P450 2C41 (489 aa).

Cysteine 434 contributes to the heme binding site.

The protein belongs to the cytochrome P450 family. Requires heme as cofactor.

Its subcellular location is the endoplasmic reticulum membrane. It localises to the microsome membrane. It catalyses the reaction an organic molecule + reduced [NADPH--hemoprotein reductase] + O2 = an alcohol + oxidized [NADPH--hemoprotein reductase] + H2O + H(+). Cytochromes P450 are a group of heme-thiolate monooxygenases. In liver microsomes, this enzyme is involved in an NADPH-dependent electron transport pathway. It oxidizes a variety of structurally unrelated compounds, including steroids, fatty acids, and xenobiotics. This chain is Cytochrome P450 2C41 (CYP2C41), found in Canis lupus familiaris (Dog).